Reading from the N-terminus, the 480-residue chain is O-acyltransferase ausP (480 aa).

Active-site proton acceptor residues include histidine 180 and aspartate 412.

This sequence belongs to the plant acyltransferase family. Monomer.

The protein operates within secondary metabolite biosynthesis; terpenoid biosynthesis. In terms of biological role, O-acyltransferase; part of the gene cluster that mediates the biosynthesis of calidodehydroaustin, a fungal meroterpenoid. The first step of the pathway is the synthesis of 3,5-dimethylorsellinic acid by the polyketide synthase ausA. 3,5-dimethylorsellinic acid is then prenylated by the polyprenyl transferase ausN. Further epoxidation by the FAD-dependent monooxygenase ausM and cyclization by the probable terpene cyclase ausL lead to the formation of protoaustinoid A. Protoaustinoid A is then oxidized to spiro-lactone preaustinoid A3 by the combined action of the FAD-binding monooxygenases ausB and ausC, and the dioxygenase ausE. Acid-catalyzed keto-rearrangement and ring contraction of the tetraketide portion of preaustinoid A3 by ausJ lead to the formation of preaustinoid A4. The aldo-keto reductase ausK, with the help of ausH, is involved in the next step by transforming preaustinoid A4 into isoaustinone which is in turn hydroxylated by the P450 monooxygenase ausI to form austinolide. The cytochrome P450 monooxygenase ausG modifies austinolide to austinol. Austinol is further acetylated to austin by the O-acetyltransferase ausP, which spontaneously changes to dehydroaustin. The cytochrome P450 monooxygenase ausR then converts dehydroaustin is into 7-dehydrodehydroaustin. The hydroxylation catalyzed by ausR permits the O-acetyltransferase ausQ to add an additional acetyl group to the molecule, leading to the formation of acetoxydehydroaustin. The short chain dehydrogenase ausT catalyzes the reduction of the double bond present between carbon atoms 1 and 2 to convert 7-dehydrodehydroaustin into 1,2-dihydro-7-hydroxydehydroaustin. AusQ catalyzes not only an acetylation reaction but also the addition of the PKS ausV diketide product to 1,2-dihydro-7-hydroxydehydroaustin, forming precalidodehydroaustin. Finally, the iron/alpha-ketoglutarate-dependent dioxygenase converts precalidodehydroaustin into calidodehydroaustin. In Aspergillus calidoustus, this protein is O-acyltransferase ausP.